A 493-amino-acid chain; its full sequence is Cytochrome P450 monooxygenase esdpG (493 aa).

The helical transmembrane segment at 10–30 (VLGVTWLSALFTLGSLSVFWL) threads the bilayer. Residue cysteine 434 participates in heme binding.

Belongs to the cytochrome P450 family. The cofactor is heme.

The protein resides in the membrane. It participates in secondary metabolite biosynthesis; terpenoid biosynthesis. Functionally, cytochrome P450 monooxygenasee; part of the cluster that mediates the biosynthesis of shearones, diterpenoid pyrones (DPs) which are structurally diverse meroterpenoids consisting of a diterpene linked by a pyrone, and which may exhibit a range of bioactivities. Whitin the pathway, esdpG takes part in the molecular scaffold modification via the hydroxylation at C-11 and C-12 and can transform shearone A into shearone C and shearone B into shearone D. The molecular scaffold is commonly biosynthesized by a series of enzymes including the non-reducing polyketide synthase (NR-PKS) esdpA that generates an alpha-pyrone; the prenyltransferase esdpC that attaches a geranylgeranyl pyrophosphate (GGPP) produced by the GGPP synthase (GGPPS) esdpD onto the pyrone unit; the FAD-dependent monooxygenase esdpE that converts an olefin on the diterpene unit into an epoxide; and the terpene cyclase esdpB that catalyzes the cyclization reactions to give the molecular backbone shearone A. In the modification steps, esdpF oxidizes the hydroxy group to a ketone at C-3 and esdpG then attaches hydroxy groups at both C-11 and C-12. After that, esdpI hydroxylates at C-20 and esdpH hydroxylates at C-6'. The ether bridge is generated by nucleophilic attack of the hydroxy group at C-20 to the carbonyl carbon at C-3. EsdpH can also functions prior to esdpI. The different combinations of these modification enzymes lead to the production of diverse shearone derivatives, shearone I being the end product of the pathway. The alpha-ketoglutarate-dependent dioxygenase esdpJ seems not to be involved in this pathway. This is Cytochrome P450 monooxygenase esdpG from Penicillium shearii (Eupenicillium shearii).